The sequence spans 194 residues: MSQIKLIVGLANPGAKYEETRHNAGEWLVNELARVFNVTLKEEAKYFGKVAKINTPQGEVRLLVPTTFMNLSGKAVGSLANFYRIKPEEILVAHDELDLLPGVAKIKQGGGHGGHNGLKDIIAALGNSNNFYRVRIGIGHPGHKDLVASYVLGKPSPSDQPLINVAVDEASRCVELLFKEGIVKATNRLNGFKA.

Y17 contacts tRNA. H22 acts as the Proton acceptor in catalysis. Residues F68, N70, and N116 each contribute to the tRNA site.

This sequence belongs to the PTH family. Monomer.

Its subcellular location is the cytoplasm. It carries out the reaction an N-acyl-L-alpha-aminoacyl-tRNA + H2O = an N-acyl-L-amino acid + a tRNA + H(+). Its function is as follows. Hydrolyzes ribosome-free peptidyl-tRNAs (with 1 or more amino acids incorporated), which drop off the ribosome during protein synthesis, or as a result of ribosome stalling. Functionally, catalyzes the release of premature peptidyl moieties from peptidyl-tRNA molecules trapped in stalled 50S ribosomal subunits, and thus maintains levels of free tRNAs and 50S ribosomes. This Glaesserella parasuis serovar 5 (strain SH0165) (Haemophilus parasuis) protein is Peptidyl-tRNA hydrolase.